A 618-amino-acid polypeptide reads, in one-letter code: UvrABC system protein C (618 aa).

Positions 13–92 (DKPGVYLMKN…IKKYRPKYNI (80 aa)) constitute a GIY-YIG domain. Positions 204–239 (LDIVENFKLNMEKAAGNLEFEKAAMLRDKINIIEKI) constitute a UVR domain.

Belongs to the UvrC family. In terms of assembly, interacts with UvrB in an incision complex.

Its subcellular location is the cytoplasm. Its function is as follows. The UvrABC repair system catalyzes the recognition and processing of DNA lesions. UvrC both incises the 5' and 3' sides of the lesion. The N-terminal half is responsible for the 3' incision and the C-terminal half is responsible for the 5' incision. This Clostridium botulinum (strain 657 / Type Ba4) protein is UvrABC system protein C.